The chain runs to 159 residues: RNA pyrophosphohydrolase (159 aa).

The Nudix hydrolase domain occupies 6–149 (GFRPNVGIIL…KREVYRRALK (144 aa)). The short motif at 38-59 (GGINPDETPEDALYRELNEEVG) is the Nudix box element.

This sequence belongs to the Nudix hydrolase family. RppH subfamily. It depends on a divalent metal cation as a cofactor.

In terms of biological role, accelerates the degradation of transcripts by removing pyrophosphate from the 5'-end of triphosphorylated RNA, leading to a more labile monophosphorylated state that can stimulate subsequent ribonuclease cleavage. The protein is RNA pyrophosphohydrolase of Pseudomonas putida (strain ATCC 700007 / DSM 6899 / JCM 31910 / BCRC 17059 / LMG 24140 / F1).